Here is a 332-residue protein sequence, read N- to C-terminus: Biotin synthase (332 aa).

Positions 46-275 (SDIQRASLLS…RARVRLSAGR (230 aa)) constitute a Radical SAM core domain. The [4Fe-4S] cluster site is built by cysteine 61, cysteine 65, and cysteine 68. Positions 106, 138, 198, and 270 each coordinate [2Fe-2S] cluster.

Belongs to the radical SAM superfamily. Biotin synthase family. Homodimer. [4Fe-4S] cluster serves as cofactor. [2Fe-2S] cluster is required as a cofactor.

The enzyme catalyses (4R,5S)-dethiobiotin + (sulfur carrier)-SH + 2 reduced [2Fe-2S]-[ferredoxin] + 2 S-adenosyl-L-methionine = (sulfur carrier)-H + biotin + 2 5'-deoxyadenosine + 2 L-methionine + 2 oxidized [2Fe-2S]-[ferredoxin]. It participates in cofactor biosynthesis; biotin biosynthesis; biotin from 7,8-diaminononanoate: step 2/2. Its function is as follows. Catalyzes the conversion of dethiobiotin (DTB) to biotin by the insertion of a sulfur atom into dethiobiotin via a radical-based mechanism. This chain is Biotin synthase, found in Methylobacterium sp. (strain 4-46).